The sequence spans 291 residues: Porphobilinogen deaminase (291 aa).

Position 237 is an S-(dipyrrolylmethanemethyl)cysteine (Cys-237).

It belongs to the HMBS family. As to quaternary structure, monomer. Dipyrromethane serves as cofactor.

The catalysed reaction is 4 porphobilinogen + H2O = hydroxymethylbilane + 4 NH4(+). It participates in porphyrin-containing compound metabolism; protoporphyrin-IX biosynthesis; coproporphyrinogen-III from 5-aminolevulinate: step 2/4. Its function is as follows. Tetrapolymerization of the monopyrrole PBG into the hydroxymethylbilane pre-uroporphyrinogen in several discrete steps. This chain is Porphobilinogen deaminase, found in Clostridium perfringens (strain ATCC 13124 / DSM 756 / JCM 1290 / NCIMB 6125 / NCTC 8237 / Type A).